The following is a 100-amino-acid chain: UPF0213 protein YhbQ (100 aa).

The GIY-YIG domain maps to 2–77; that stretch reads TPWFLYLIRT…KQLTKRQKER (76 aa).

Belongs to the UPF0213 family.

In Escherichia coli O81 (strain ED1a), this protein is UPF0213 protein YhbQ.